A 648-amino-acid chain; its full sequence is MKNSAAIFLTSSLILLLQTLHGVKAGFICVGSSFPTNSSYQKNRDSLFSTLSDKVTTNGGFYNASLDGVHVVGLCRRDYDRQGCINCVEESIRQIKTSCSNRVQSFHCNSDDRERVSCLVRTTDQSTYRILELGPATNDPSPVAIDTFAKNMTLFRQEWEAMVDRTLEAVTIDNSTTVLKYYGALKSEFSEFPNVYMMMQCTPDINSGACKRCLQASVTYFRDQNWGRQGGGICRPSCVFRWEFYPFYGAFANVTRVPAPPRALIPRTEAISITRLKGGIIAIFVVPIVINLLVFIGLIRAYTRIRKSYNGINEAQYDYGGQSKLRFDFRMILTATDDFSFENKIGQGGFGSVYKGKLPGGEEIAVKRLTRGSGQGEIEFRNEVLLLTRLQHRNLVKLLGFCNEGDEEILVYEFVPNSSLDHFIFDEEKRLLLTWDMRARIIEGVARGLVYLHEDSQLRIIHRDLKASNILLDAYMNPKVADFGMARLFNMDQTRAVTRKVVGTFGYMAPEYVRNRTFSVKTDVYSFGVVLLEMITGRSNKNYFEALGLPAYAWKCWVAGEAASIIDHVLSRSRSNEIMRFIHIGLLCVQENVSKRPTMSLVIQWLGSETIAIPLPTVAGFTNASYQAEHEAGTLSLNELSITELSPR.

The signal sequence occupies residues 1–25 (MKNSAAIFLTSSLILLLQTLHGVKA). 2 Gnk2-homologous domains span residues 26-127 (GFIC…DQST) and 140-247 (PSPV…FYPF). At 26 to 278 (GFICVGSSFP…EAISITRLKG (253 aa)) the chain is on the extracellular side. N-linked (GlcNAc...) asparagine glycans are attached at residues asparagine 37, asparagine 63, asparagine 151, asparagine 174, and asparagine 253. The helical transmembrane segment at 279–299 (GIIAIFVVPIVINLLVFIGLI) threads the bilayer. Residues 300–648 (RAYTRIRKSY…ELSITELSPR (349 aa)) lie on the Cytoplasmic side of the membrane. Residues 339-611 (FSFENKIGQG…VIQWLGSETI (273 aa)) enclose the Protein kinase domain. Residues 345–353 (IGQGGFGSV) and lysine 367 each bind ATP. At tyrosine 412 the chain carries Phosphotyrosine. Residue aspartate 464 is the Proton acceptor of the active site. Residue serine 468 is modified to Phosphoserine. Phosphothreonine is present on threonine 504. Tyrosine 512 is subject to Phosphotyrosine.

Belongs to the protein kinase superfamily. Ser/Thr protein kinase family. CRK subfamily.

The protein resides in the membrane. It catalyses the reaction L-seryl-[protein] + ATP = O-phospho-L-seryl-[protein] + ADP + H(+). The enzyme catalyses L-threonyl-[protein] + ATP = O-phospho-L-threonyl-[protein] + ADP + H(+). The sequence is that of Cysteine-rich receptor-like protein kinase 38 (CRK38) from Arabidopsis thaliana (Mouse-ear cress).